The chain runs to 332 residues: Nuclear hormone receptor family member nhr-9 (332 aa).

A DNA-binding region (nuclear receptor) is located at residues 11 to 85 (ERRCAICSKL…MGMRIVTNQY (75 aa)). 2 consecutive NR C4-type zinc fingers follow at residues 14-34 (CAICSKLGNSYNYGVLSCNAC) and 50-73 (CINNDNCDTSNLILTCRQCRYNKC). The 232-residue stretch at 101–332 (DRSNKLMNFQ…KRLCAELLGA (232 aa)) folds into the NR LBD domain.

The protein belongs to the nuclear hormone receptor family.

It localises to the nucleus. Its function is as follows. Orphan nuclear receptor. The polypeptide is Nuclear hormone receptor family member nhr-9 (nhr-9) (Caenorhabditis elegans).